Here is a 2346-residue protein sequence, read N- to C-terminus: Highly reducing polyketide synthase claI (2346 aa).

The Ketosynthase family 3 (KS3) domain occupies 10–412 (TPAIAVVGMA…GTNCHLIVED (403 aa)). Residues cysteine 183, histidine 295, and histidine 335 each act as for beta-ketoacyl synthase activity in the active site. The segment at 530–842 (IFTGQGSQWP…EYFSALKRGE (313 aa)) is malonyl-CoA:ACP transacylase (MAT) domain. The active-site For malonyltransferase activity is serine 622. The N-terminal hotdog fold stretch occupies residues 912 to 1048 (HDLLGSKILG…GLIRTSEEDS (137 aa)). The segment at 912-1213 (HDLLGSKILG…INGLRFSSVD (302 aa)) is dehydratase (DH) domain. In terms of domain architecture, PKS/mFAS DH spans 912–1218 (HDLLGSKILG…FSSVDLGSVQ (307 aa)). The Proton acceptor; for dehydratase activity role is filled by histidine 944. The interval 1060 to 1218 (IHATPAQVWY…FSSVDLGSVQ (159 aa)) is C-terminal hotdog fold. The active-site Proton donor; for dehydratase activity is the aspartate 1124. Positions 1633 to 1946 (GSLEALQWTQ…SARHIGKILI (314 aa)) are enoyl reductase (ER) domain. The segment at 1972–2151 (TYLIVGGLRG…HSLDLGVVDA (180 aa)) is ketoreductase (KR) domain. One can recognise a Carrier domain in the interval 2258–2336 (SQLVEKAVTL…ALAEKMVSKV (79 aa)). Serine 2296 bears the O-(pantetheine 4'-phosphoryl)serine mark.

It depends on pantetheine 4'-phosphate as a cofactor.

The protein operates within secondary metabolite biosynthesis. Its function is as follows. Highly reducing polyketide synthase; part of the cla gene cluster that produces clavatol and ortho-quinone methide. The clavatol biosynthesis cluster cla and the terrestric acid cluster tra are both involved in the production of peniphenones and penilactones. The non-reducing PKS claF is responsible for the formation of clavatol from successive condensations of 3 malonyl-CoA units, presumably with a simple acetyl-CoA starter unit, and 2 methylation steps. The esterase claE probably collaborates with claF by catalyzing the hydrolysis of ACP-bound acyl intermediates to free the ACP from stalled intermediates. The clavatol oxidase claD then converts clavatol to hydroxyclavatol. Spontaneous dehydration of hydroxyclavatol leads to the accumulation of the highly active ortho-quinone methide. On the other hand, the PKS-NRPS hybrid traA is involved in the formation of crustosic acid, with the help of traB and traD. The polyketide synthase module (PKS) of traA is responsible for the synthesis of the polyketide backbone via the condensation of an acetyl-CoA starter unit with 3 malonyl-CoA units. The downstream nonribosomal peptide synthetase (NRPS) module then amidates the carboxyl end of the polyketide with L-malic acid. Because traA lacks a designated enoylreductase (ER) domain, the required activity is provided the enoyl reductase traG. Crustosic acid undergoes decarboxylation and isomerization to the terrestric acid, catalyzed by the 2-oxoglutarate-dependent dioxygenase traH. Both acids are further converted to the 2 gamma-butyrolactones (R)-5-methyltetronic acid and (S)-5-carboxylmethyltetronic acid, with involvement of the cytochrome P450 monooxygenase claJ. Spontaneous addition of the methide to these gamma-butyrolactones leads to peniphenone D and penilactone D, which undergo again stereospecific attacking by methide to give penilactones A and B. The function of the highly reducing polyketide synthase claI has not been investigated yet. The sequence is that of Highly reducing polyketide synthase claI from Penicillium crustosum (Blue mold fungus).